We begin with the raw amino-acid sequence, 468 residues long: tRNA modification GTPase MnmE (468 aa).

Arg29, Glu97, and Lys136 together coordinate (6S)-5-formyl-5,6,7,8-tetrahydrofolate. The TrmE-type G domain occupies 232–390 (GFELAIVGRP…VVAHIVARME (159 aa)). Asn242 is a K(+) binding site. Residues 242 to 247 (NVGKSS), 261 to 267 (TDLAGTT), and 286 to 289 (DTAG) each bind GTP. Ser246 lines the Mg(2+) pocket. K(+)-binding residues include Thr261, Leu263, and Thr266. Thr267 lines the Mg(2+) pocket. Lys468 lines the (6S)-5-formyl-5,6,7,8-tetrahydrofolate pocket.

Belongs to the TRAFAC class TrmE-Era-EngA-EngB-Septin-like GTPase superfamily. TrmE GTPase family. In terms of assembly, homodimer. Heterotetramer of two MnmE and two MnmG subunits. It depends on K(+) as a cofactor.

The protein localises to the cytoplasm. Exhibits a very high intrinsic GTPase hydrolysis rate. Involved in the addition of a carboxymethylaminomethyl (cmnm) group at the wobble position (U34) of certain tRNAs, forming tRNA-cmnm(5)s(2)U34. This chain is tRNA modification GTPase MnmE, found in Magnetococcus marinus (strain ATCC BAA-1437 / JCM 17883 / MC-1).